A 207-amino-acid chain; its full sequence is Histidine biosynthesis bifunctional protein HisIE (207 aa).

The segment at 1–117 (MQNFKELNEK…KISKNADFVF (117 aa)) is phosphoribosyl-AMP cyclohydrolase. The phosphoribosyl-ATP pyrophosphohydrolase stretch occupies residues 118–207 (LARLEKLINA…ISKLKERHKA (90 aa)).

In the N-terminal section; belongs to the PRA-CH family. This sequence in the C-terminal section; belongs to the PRA-PH family.

The protein resides in the cytoplasm. It catalyses the reaction 1-(5-phospho-beta-D-ribosyl)-ATP + H2O = 1-(5-phospho-beta-D-ribosyl)-5'-AMP + diphosphate + H(+). It carries out the reaction 1-(5-phospho-beta-D-ribosyl)-5'-AMP + H2O = 1-(5-phospho-beta-D-ribosyl)-5-[(5-phospho-beta-D-ribosylamino)methylideneamino]imidazole-4-carboxamide. The protein operates within amino-acid biosynthesis; L-histidine biosynthesis; L-histidine from 5-phospho-alpha-D-ribose 1-diphosphate: step 2/9. It participates in amino-acid biosynthesis; L-histidine biosynthesis; L-histidine from 5-phospho-alpha-D-ribose 1-diphosphate: step 3/9. This is Histidine biosynthesis bifunctional protein HisIE (hisI) from Campylobacter jejuni subsp. jejuni serotype O:2 (strain ATCC 700819 / NCTC 11168).